The following is a 55-amino-acid chain: Large ribosomal subunit protein bL33 (55 aa).

Belongs to the bacterial ribosomal protein bL33 family.

This Bartonella bacilliformis (strain ATCC 35685 / KC583 / Herrer 020/F12,63) protein is Large ribosomal subunit protein bL33.